The following is a 1974-amino-acid chain: Protein Ycf2 (1974 aa).

The segment at 219-246 (SQLKGSSYQSRDHLDSISNEDSEYHNQR) is disordered. Position 1308–1315 (1308–1315 (GSIGTGRS)) interacts with ATP.

The protein belongs to the Ycf2 family.

The protein resides in the plastid. It localises to the chloroplast stroma. Functionally, probable ATPase of unknown function. Its presence in a non-photosynthetic plant (Epifagus virginiana) and experiments in tobacco indicate that it has an essential function which is probably not related to photosynthesis. This is Protein Ycf2 from Jasminum nudiflorum (Winter jasmine).